Reading from the N-terminus, the 517-residue chain is MWVMQGERRRARAPWGPPDTGGALLERWISRERRSDSRDASGSAKQRSAMGNSLPVESKFTDEKENDRIKYVVSSMQGWGEKMEDAHAAILNLDDTMTSFFGVYDGHGGAEVASYCAKRFHIELCNHEDYDSNLSNAMRSAFYSMDEDLQLSDAWRELVIPRNNGWMYFIKAGVCANLSPFPQATYTAPSYEGSTACVVVIRGDQLIVGHAGDSRCVLSRNGQASALSVDHKPDSESERERVQNAGGVAVGYSYRKIMGRWVTKKQWGFTDFKGRVSISRSIGDFACKKNERLPPEDQMLTCNPDILTMDITDDMEFLVIATEGLWCNMTNQNVVDHTHDRLLEGAEARVICEELVQFGLPSGDNTTVILVLFKPGAFPAVPPVDTDTDTDSHIDDDVDPTGSNNATASDNNDPANEVDPTANAGSDDSNTGDEVKVDATATAVGSSSTTAVAADEGTGNPPHGALVDTDDEDGLTYSQDMDLPPASTSPPTFPDEDDLPRSNPDKSPPHDDTYHRW.

The segment at 1 to 59 (MWVMQGERRRARAPWGPPDTGGALLERWISRERRSDSRDASGSAKQRSAMGNSLPVESK) is disordered. The segment covering 28–39 (WISRERRSDSRD) has biased composition (basic and acidic residues). In terms of domain architecture, PPM-type phosphatase spans 70 to 373 (KYVVSSMQGW…DNTTVILVLF (304 aa)). D105, G106, E323, and D364 together coordinate Mn(2+). The disordered stretch occupies residues 380–517 (AVPPVDTDTD…PPHDDTYHRW (138 aa)). Polar residues predominate over residues 402–414 (GSNNATASDNNDP). A compositionally biased stretch (low complexity) spans 438–455 (DATATAVGSSSTTAVAAD). A compositionally biased stretch (basic and acidic residues) spans 499 to 517 (LPRSNPDKSPPHDDTYHRW).

Belongs to the PP2C family. Requires Mg(2+) as cofactor. Mn(2+) serves as cofactor.

It catalyses the reaction O-phospho-L-seryl-[protein] + H2O = L-seryl-[protein] + phosphate. It carries out the reaction O-phospho-L-threonyl-[protein] + H2O = L-threonyl-[protein] + phosphate. The sequence is that of Probable protein phosphatase 2C 20 from Oryza sativa subsp. japonica (Rice).